The chain runs to 161 residues: Nucleotide-binding protein SO_3815 (161 aa).

This sequence belongs to the YajQ family.

Its function is as follows. Nucleotide-binding protein. This Shewanella oneidensis (strain ATCC 700550 / JCM 31522 / CIP 106686 / LMG 19005 / NCIMB 14063 / MR-1) protein is Nucleotide-binding protein SO_3815.